The following is a 237-amino-acid chain: DNA repair protein RecO (237 aa).

Belongs to the RecO family.

Involved in DNA repair and RecF pathway recombination. The chain is DNA repair protein RecO from Cereibacter sphaeroides (strain ATCC 17025 / ATH 2.4.3) (Rhodobacter sphaeroides).